We begin with the raw amino-acid sequence, 511 residues long: DEP domain-containing protein 7 (511 aa).

The 91-residue stretch at 46-136 folds into the DEP domain; that stretch reads LQTQVEVKKR…SSCSLYRFTT (91 aa).

This sequence belongs to the DEPDC7 family.

The protein is DEP domain-containing protein 7 (Depdc7) of Rattus norvegicus (Rat).